The primary structure comprises 651 residues: Acetyl-coenzyme A synthetase (651 aa).

CoA-binding positions include 189–192 (RGGK), Thr311, and Asn335. ATP contacts are provided by residues 387–389 (GEP), 411–416 (DTWWQT), Asp500, and Arg515. Ser523 provides a ligand contact to CoA. An ATP-binding site is contributed by Arg526. Mg(2+) is bound by residues Val537, His539, and Val542. Arg586 contributes to the CoA binding site. At Lys611 the chain carries N6-acetyllysine.

The protein belongs to the ATP-dependent AMP-binding enzyme family. Mg(2+) serves as cofactor. In terms of processing, acetylated. Deacetylation by the SIR2-homolog deacetylase activates the enzyme.

The catalysed reaction is acetate + ATP + CoA = acetyl-CoA + AMP + diphosphate. Its function is as follows. Catalyzes the conversion of acetate into acetyl-CoA (AcCoA), an essential intermediate at the junction of anabolic and catabolic pathways. AcsA undergoes a two-step reaction. In the first half reaction, AcsA combines acetate with ATP to form acetyl-adenylate (AcAMP) intermediate. In the second half reaction, it can then transfer the acetyl group from AcAMP to the sulfhydryl group of CoA, forming the product AcCoA. The chain is Acetyl-coenzyme A synthetase from Brucella anthropi (strain ATCC 49188 / DSM 6882 / CCUG 24695 / JCM 21032 / LMG 3331 / NBRC 15819 / NCTC 12168 / Alc 37) (Ochrobactrum anthropi).